A 299-amino-acid chain; its full sequence is Ribosomal protein L11 methyltransferase (299 aa).

Thr-140, Gly-161, Asp-183, and Asn-232 together coordinate S-adenosyl-L-methionine.

It belongs to the methyltransferase superfamily. PrmA family.

Its subcellular location is the cytoplasm. It catalyses the reaction L-lysyl-[protein] + 3 S-adenosyl-L-methionine = N(6),N(6),N(6)-trimethyl-L-lysyl-[protein] + 3 S-adenosyl-L-homocysteine + 3 H(+). Its function is as follows. Methylates ribosomal protein L11. This chain is Ribosomal protein L11 methyltransferase, found in Synechococcus elongatus (strain ATCC 33912 / PCC 7942 / FACHB-805) (Anacystis nidulans R2).